The primary structure comprises 910 residues: ZZ-type zinc finger-containing protein 3 (910 aa).

2 disordered regions span residues 41–117 (AHPE…RQAE) and 133–153 (EATN…PGEH). Residues 67–84 (QKGTNNGRTSDVRQQSAR) are compositionally biased toward polar residues. Residues Ser89, Ser96, Ser137, Ser138, and Ser142 each carry the phosphoserine modification. Over residues 96–116 (SSSEKDDLERQALESCERRQA) the composition is skewed to basic and acidic residues. Residues 142–153 (SPVKPDKEPGEH) are compositionally biased toward basic and acidic residues. A Glycyl lysine isopeptide (Lys-Gly) (interchain with G-Cter in SUMO2) cross-link involves residue Lys283. Disordered regions lie at residues 303–358 (TAES…VSGE), 373–444 (TSLS…PQDG), and 609–641 (ARPK…SHNR). Polar residues-rich tracts occupy residues 331 to 347 (SSAS…NPLD) and 397 to 434 (SSPT…SESP). Lys401 carries the post-translational modification N6-acetyllysine. A Phosphoserine modification is found at Ser613. The segment covering 613–622 (SPLDPKKDGE) has biased composition (basic and acidic residues). Lys654 participates in a covalent cross-link: Glycyl lysine isopeptide (Lys-Gly) (interchain with G-Cter in SUMO2). An HTH myb-type domain is found at 654 to 714 (KPETFNQLWT…RVQKYFIKLT (61 aa)). Positions 687 to 710 (WQKIADELGNRTAKQVASRVQKYF) form a DNA-binding region, H-T-H motif. Residue Lys708 is modified to N6-acetyllysine. Lys715 participates in a covalent cross-link: Glycyl lysine isopeptide (Lys-Gly) (interchain with G-Cter in SUMO2). The segment at 825 to 884 (HVGFKCDNCGVEPIQGVRWHCQDCPPEMSLDFCDSCSDCPHETDIHKEDHQLEPVYKSET) adopts a ZZ-type zinc-finger fold. Positions 830, 833, 845, 848, 857, 860, 870, and 874 each coordinate Zn(2+).

Component of the ADA2A-containing complex (ATAC), composed of KAT14, KAT2A, TADA2L, TADA3L, ZZ3, MBIP, WDR5, YEATS2, CCDC101 and DR1. Interacts via (ZZ-type zinc finger) with histone H3 in a methylation-independent manner and acetylation on 'Lys-4' (H3K4ac) moderately enhances the interaction.

The protein resides in the nucleus. Functionally, histone H3 reader that is required for the ATAC complex-mediated maintenance of histone acetylation and gene activation. Component of the ATAC complex, a complex with histone acetyltransferase activity on histones H3 and H4. This Mus musculus (Mouse) protein is ZZ-type zinc finger-containing protein 3 (Zzz3).